The primary structure comprises 719 residues: 2'-5'-oligoadenylate synthase 2 (719 aa).

Glycine 2 carries N-myristoyl glycine lipidation. OAS domain regions lie at residues valine 11–valine 335 and threonine 343–proline 683. Lysine 378 carries the post-translational modification N6-acetyllysine. Serine 396 contacts ATP. Aspartate 408, aspartate 410, and aspartate 481 together coordinate Mg(2+). Positions 544 and 547 each coordinate ATP.

It belongs to the 2-5A synthase family. In terms of assembly, homodimer. It depends on Mg(2+) as a cofactor. Post-translationally, myristoylation is not essential for its activity. In terms of processing, glycosylated. Glycosylation is essential for its activity.

The protein localises to the cytoplasm. It is found in the perinuclear region. It catalyses the reaction 3 ATP = 5'-triphosphoadenylyl-(2'-&gt;5')-adenylyl-(2'-&gt;5')-adenosine + 2 diphosphate. Produced as a latent enzyme which is activated by double stranded RNA (dsRNA) generated during the course of viral infection. The dsRNA activator must be at least 15 nucleotides long, and no modification of the 2'-hydroxyl group is tolerated. ssRNA or dsDNA do not act as activators. Strongly inhibited by copper, iron and zinc ions. Partially inhibited by cobalt and nickel ions. Its function is as follows. Interferon-induced, dsRNA-activated antiviral enzyme which plays a critical role in cellular innate antiviral response. Activated by detection of double stranded RNA (dsRNA): polymerizes higher oligomers of 2'-5'-oligoadenylates (2-5A) from ATP which then bind to the inactive monomeric form of ribonuclease L (RNASEL) leading to its dimerization and subsequent activation. Activation of RNASEL leads to degradation of cellular as well as viral RNA, resulting in the inhibition of protein synthesis, thus terminating viral replication. Can mediate the antiviral effect via the classical RNASEL-dependent pathway or an alternative antiviral pathway independent of RNASEL. In addition, it may also play a role in other cellular processes such as apoptosis, cell growth, differentiation and gene regulation. May act as a negative regulator of lactation, stopping lactation in virally infected mammary gland lobules, thereby preventing transmission of viruses to neonates. Non-infected lobules would not be affected, allowing efficient pup feeding during infection. This is 2'-5'-oligoadenylate synthase 2 from Homo sapiens (Human).